The chain runs to 394 residues: Probable tRNA sulfurtransferase (394 aa).

The region spanning 61–168 is the THUMP domain; the sequence is DETVATLSRI…PMINIYSEEI (108 aa). ATP-binding positions include 185-186, 210-211, Arg267, Gly289, and Gln298; these read LL and YF.

The protein belongs to the ThiI family.

The protein resides in the cytoplasm. The enzyme catalyses [ThiI sulfur-carrier protein]-S-sulfanyl-L-cysteine + a uridine in tRNA + 2 reduced [2Fe-2S]-[ferredoxin] + ATP + H(+) = [ThiI sulfur-carrier protein]-L-cysteine + a 4-thiouridine in tRNA + 2 oxidized [2Fe-2S]-[ferredoxin] + AMP + diphosphate. The catalysed reaction is [ThiS sulfur-carrier protein]-C-terminal Gly-Gly-AMP + S-sulfanyl-L-cysteinyl-[cysteine desulfurase] + AH2 = [ThiS sulfur-carrier protein]-C-terminal-Gly-aminoethanethioate + L-cysteinyl-[cysteine desulfurase] + A + AMP + 2 H(+). Its pathway is cofactor biosynthesis; thiamine diphosphate biosynthesis. In terms of biological role, catalyzes the ATP-dependent transfer of a sulfur to tRNA to produce 4-thiouridine in position 8 of tRNAs, which functions as a near-UV photosensor. Also catalyzes the transfer of sulfur to the sulfur carrier protein ThiS, forming ThiS-thiocarboxylate. This is a step in the synthesis of thiazole, in the thiamine biosynthesis pathway. The sulfur is donated as persulfide by IscS. The protein is Probable tRNA sulfurtransferase of Agathobacter rectalis (strain ATCC 33656 / DSM 3377 / JCM 17463 / KCTC 5835 / VPI 0990) (Eubacterium rectale).